The following is a 352-amino-acid chain: Phosphoribosylformylglycinamidine cyclo-ligase (352 aa).

The protein belongs to the AIR synthase family.

The protein localises to the cytoplasm. It catalyses the reaction 2-formamido-N(1)-(5-O-phospho-beta-D-ribosyl)acetamidine + ATP = 5-amino-1-(5-phospho-beta-D-ribosyl)imidazole + ADP + phosphate + H(+). The protein operates within purine metabolism; IMP biosynthesis via de novo pathway; 5-amino-1-(5-phospho-D-ribosyl)imidazole from N(2)-formyl-N(1)-(5-phospho-D-ribosyl)glycinamide: step 2/2. This Pseudomonas fluorescens (strain ATCC BAA-477 / NRRL B-23932 / Pf-5) protein is Phosphoribosylformylglycinamidine cyclo-ligase.